We begin with the raw amino-acid sequence, 104 residues long: Thioredoxin (104 aa).

The 103-residue stretch at 2-104 (AIVKVTDSDF…NLAEVLDKHL (103 aa)) folds into the Thioredoxin domain. The cysteines at positions 29 and 32 are disulfide-linked.

Belongs to the thioredoxin family.

Functionally, component of the thioredoxin-thioredoxin reductase system. Participates in various redox reactions through the reversible oxidation of its active center dithiol to a disulfide and catalyzes dithiol-disulfide exchange reactions. The chain is Thioredoxin (trxA) from Staphylococcus epidermidis (strain ATCC 35984 / DSM 28319 / BCRC 17069 / CCUG 31568 / BM 3577 / RP62A).